A 191-amino-acid polypeptide reads, in one-letter code: Protein YceI (191 aa).

The N-terminal stretch at 1–22 (MKKNLLGFTLASLLFTTGSAVA) is a signal peptide.

Belongs to the UPF0312 family. Type 1 subfamily.

The protein localises to the periplasm. The polypeptide is Protein YceI (Salmonella dublin (strain CT_02021853)).